Consider the following 151-residue polypeptide: Ribosome maturation factor RimP (151 aa).

The protein belongs to the RimP family.

Its subcellular location is the cytoplasm. Functionally, required for maturation of 30S ribosomal subunits. This chain is Ribosome maturation factor RimP, found in Thermoanaerobacter sp. (strain X514).